Reading from the N-terminus, the 333-residue chain is Mitochondrial 2-oxoglutarate/malate carrier protein (333 aa).

3 Solcar repeats span residues 29-127 (FRLI…LFER), 136-227 (PGFL…SKQF), and 236-325 (DNIL…MNKA). 6 helical membrane-spanning segments follow: residues 30-61 (RLIALGTCGDSCTHVRQPPKTWMGATVFVQPL), 102-120 (GLSAGLLRQATYTTTRLGI), 138-159 (FLLKALIGMTAGATGAFVGTPA), 202-221 (GCIPTMARAVVVNAAQLASY), 241-259 (HFCASMISGLVTTAASMPV), and 300-319 (GFTPYYARLGPHTVLTFIFL).

This sequence belongs to the mitochondrial carrier (TC 2.A.29) family. As to quaternary structure, interacts with SMIM26.

It is found in the membrane. It catalyses the reaction (S)-malate(in) + 2-oxoglutarate(out) = (S)-malate(out) + 2-oxoglutarate(in). The catalysed reaction is malonate(in) + 2-oxoglutarate(out) = malonate(out) + 2-oxoglutarate(in). The enzyme catalyses succinate(in) + 2-oxoglutarate(out) = succinate(out) + 2-oxoglutarate(in). It carries out the reaction maleate(in) + 2-oxoglutarate(out) = maleate(out) + 2-oxoglutarate(in). It catalyses the reaction oxaloacetate(in) + 2-oxoglutarate(out) = oxaloacetate(out) + 2-oxoglutarate(in). Its function is as follows. Catalyzes the transport of 2-oxoglutarate (alpha-oxoglutarate) across the inner mitochondrial membrane in an electroneutral exchange for malate. Can also exchange 2-oxoglutarate for other dicarboxylic acids such as malonate, succinate, maleate and oxaloacetate, although with lower affinity. Contributes to several metabolic processes, including the malate-aspartate shuttle, the oxoglutarate/isocitrate shuttle, in gluconeogenesis from lactate, and in nitrogen metabolism. Maintains mitochondrial fusion and fission events, and the organization and morphology of cristae. Involved in the regulation of apoptosis. Helps protect from cytotoxic-induced apoptosis by modulating glutathione levels in mitochondria. This chain is Mitochondrial 2-oxoglutarate/malate carrier protein (SLC25A11), found in Sus scrofa (Pig).